Consider the following 166-residue polypeptide: Peptide methionine sulfoxide reductase MsrA (166 aa).

Residue Cys-11 is part of the active site.

This sequence belongs to the MsrA Met sulfoxide reductase family.

It carries out the reaction L-methionyl-[protein] + [thioredoxin]-disulfide + H2O = L-methionyl-(S)-S-oxide-[protein] + [thioredoxin]-dithiol. The enzyme catalyses [thioredoxin]-disulfide + L-methionine + H2O = L-methionine (S)-S-oxide + [thioredoxin]-dithiol. In terms of biological role, has an important function as a repair enzyme for proteins that have been inactivated by oxidation. Catalyzes the reversible oxidation-reduction of methionine sulfoxide in proteins to methionine. In Mycoplasmopsis pulmonis (strain UAB CTIP) (Mycoplasma pulmonis), this protein is Peptide methionine sulfoxide reductase MsrA.